The following is a 423-amino-acid chain: T-box transcription factor T-A (423 aa).

The segment at residues 44-212 (LWTKFKELTN…HNPFAKAFLD (169 aa)) is a DNA-binding region (T-box). The segment covering 215 to 227 (ERSDHKEVPDHST) has biased composition (basic and acidic residues). 2 disordered regions span residues 215–234 (ERSD…QSGY) and 280–304 (AAPY…SSGS). The span at 290 to 304 (RSTTTNNYMDNSSGS) shows a compositional bias: polar residues.

As to quaternary structure, monomer. Binds DNA as a monomer. First expressed at the dorsal side of the blastula embryo. Expressed in the germ ring, shield and chordamesoderm during gastrulation and is restricted to the notochord and tailbud during somitogenesis (at protein level).

It is found in the nucleus. Involved in the transcriptional regulation of genes required for mesoderm differentiation, including itself. Indispensable for the formation of the notochord and the tail structure. Functions together with tbx16/spadetail in development of trunk and tail mesoderm. Functions by itself early in development to repress medial floor plate and promote notochord fate but at later times, functions together with tbx16/spadetail to promote medial floor plate formation. Acts in a parallel pathway to, but cooperates with, non-canonical wnt-signaling during tail formation. Required for the morphogenesis of Kupffer's vesicle and regulates left-right asymmetry. This chain is T-box transcription factor T-A (tbxta), found in Danio rerio (Zebrafish).